The sequence spans 635 residues: Cationic amino acid transporter 4 (635 aa).

3 helical membrane-spanning segments follow: residues 42-62, 66-86, and 113-133; these read LTLL…TGTV, MAGP…LLAA, and IWAF…GAAV. N-linked (GlcNAc...) asparagine glycosylation is found at N146, N151, and N195. A helical membrane pass occupies residues 197–217; it reads TFSAISLIVILFIIVLGFILA. The N-linked (GlcNAc...) asparagine glycan is linked to N221. 5 helical membrane passes run 229-249, 270-290, 318-338, 365-385, and 391-411; these read FAPF…YAFV, MAIA…STVL, GFIV…SNLF, QVPV…ALLL, and VQFL…SIIV. S422 and S427 each carry phosphoserine. 4 helical membrane passes run 478–498, 508–528, 539–559, and 567–587; these read VAWA…VLVF, WGYV…LLVL, TFQI…NTCL, and TWLR…GYGI.

It belongs to the amino acid-polyamine-organocation (APC) superfamily. Cationic amino acid transporter (CAT) (TC 2.A.3.3) family.

Its subcellular location is the membrane. Involved in the transport of the cationic amino acids (arginine, lysine and ornithine). In Mus musculus (Mouse), this protein is Cationic amino acid transporter 4 (Slc7a4).